We begin with the raw amino-acid sequence, 193 residues long: NAD(P)H-quinone oxidoreductase subunit J (193 aa).

Positions M1 to S21 are disordered.

It belongs to the complex I 30 kDa subunit family. NDH-1 can be composed of about 15 different subunits; different subcomplexes with different compositions have been identified which probably have different functions.

It is found in the cellular thylakoid membrane. The catalysed reaction is a plastoquinone + NADH + (n+1) H(+)(in) = a plastoquinol + NAD(+) + n H(+)(out). It carries out the reaction a plastoquinone + NADPH + (n+1) H(+)(in) = a plastoquinol + NADP(+) + n H(+)(out). In terms of biological role, NDH-1 shuttles electrons from an unknown electron donor, via FMN and iron-sulfur (Fe-S) centers, to quinones in the respiratory and/or the photosynthetic chain. The immediate electron acceptor for the enzyme in this species is believed to be plastoquinone. Couples the redox reaction to proton translocation, and thus conserves the redox energy in a proton gradient. Cyanobacterial NDH-1 also plays a role in inorganic carbon-concentration. The protein is NAD(P)H-quinone oxidoreductase subunit J of Synechococcus sp. (strain CC9902).